The primary structure comprises 450 residues: Probable glucoamylase (450 aa).

A signal peptide spans 1–16 (MRTYWLFLLLGGVVSA). Positions 17–28 (ESLLSPNKRSKE) are excised as a propeptide. Trp-147 serves as a coordination point for substrate. The Proton acceptor role is filled by Asp-203. Glu-206 acts as the Proton donor in catalysis. 2 N-linked (GlcNAc...) asparagine glycosylation sites follow: Asn-383 and Asn-409.

This sequence belongs to the glycosyl hydrolase 15 family.

The catalysed reaction is Hydrolysis of terminal (1-&gt;4)-linked alpha-D-glucose residues successively from non-reducing ends of the chains with release of beta-D-glucose.. This chain is Probable glucoamylase (meu17), found in Schizosaccharomyces pombe (strain 972 / ATCC 24843) (Fission yeast).